Reading from the N-terminus, the 262-residue chain is Cap-specific mRNA (nucleoside-2'-O-)-methyltransferase (262 aa).

In terms of domain architecture, RrmJ-type SAM-dependent 2'-O-MTase spans 34 to 226 (TRRPRCWRKL…ERYLICFNKL (193 aa)). The S-adenosyl-L-methionine site is built by Gly-67 and Asp-140. Lys-180 functions as the Proton acceptor in the catalytic mechanism.

The catalysed reaction is a 5'-end (N(7)-methyl 5'-triphosphoguanosine)-ribonucleoside in mRNA + S-adenosyl-L-methionine = a 5'-end (N(7)-methyl 5'-triphosphoguanosine)-(2'-O-methyl-ribonucleoside) in mRNA + S-adenosyl-L-homocysteine + H(+). Functionally, S-adenosyl-L-methionine-dependent methyltransferase that mediates mRNA cap 2'-O-ribose methylation to the 5'-cap structure of late viral transcripts. The polypeptide is Cap-specific mRNA (nucleoside-2'-O-)-methyltransferase (Lepidoptera (butterflies and moths)).